The sequence spans 378 residues: D-alanine--D-alanine ligase (378 aa).

The 212-residue stretch at 157 to 368 folds into the ATP-grasp domain; the sequence is KVVFESAGLS…YGDLIDELIH (212 aa). Position 189–244 (189–244) interacts with ATP; that stretch reads VDKLGFPVFVKPARAGSSMGISKVDSMEGLDAAIDEARRHDLKLVIEAGIVGREIE. Mg(2+) contacts are provided by D322, E335, and N337.

This sequence belongs to the D-alanine--D-alanine ligase family. Mg(2+) is required as a cofactor. It depends on Mn(2+) as a cofactor.

Its subcellular location is the cytoplasm. It catalyses the reaction 2 D-alanine + ATP = D-alanyl-D-alanine + ADP + phosphate + H(+). The protein operates within cell wall biogenesis; peptidoglycan biosynthesis. Its function is as follows. Cell wall formation. This chain is D-alanine--D-alanine ligase, found in Paenarthrobacter aurescens (strain TC1).